The sequence spans 86 residues: Small ribosomal subunit protein uS15 (86 aa).

Belongs to the universal ribosomal protein uS15 family. In terms of assembly, part of the 30S ribosomal subunit. Forms a bridge to the 50S subunit in the 70S ribosome, contacting the 23S rRNA.

In terms of biological role, one of the primary rRNA binding proteins, it binds directly to 16S rRNA where it helps nucleate assembly of the platform of the 30S subunit by binding and bridging several RNA helices of the 16S rRNA. Forms an intersubunit bridge (bridge B4) with the 23S rRNA of the 50S subunit in the ribosome. The sequence is that of Small ribosomal subunit protein uS15 from Mycoplasma genitalium (strain ATCC 33530 / DSM 19775 / NCTC 10195 / G37) (Mycoplasmoides genitalium).